A 775-amino-acid polypeptide reads, in one-letter code: Dipeptidyl peptidase 4 (775 aa).

A signal peptide spans 1 to 15 (MKLLSLLMLAGIAQA). N-linked (GlcNAc...) asparagine glycosylation is found at asparagine 81, asparagine 111, asparagine 170, and asparagine 219. Catalysis depends on charge relay system residues serine 613, aspartate 690, and histidine 725.

It belongs to the peptidase S9B family.

It is found in the secreted. It carries out the reaction Release of an N-terminal dipeptide, Xaa-Yaa-|-Zaa-, from a polypeptide, preferentially when Yaa is Pro, provided Zaa is neither Pro nor hydroxyproline.. Its function is as follows. Extracellular dipeptidyl-peptidase which removes N-terminal dipeptides sequentially from polypeptides having unsubstituted N-termini provided that the penultimate residue is proline. Contributes to pathogenicity. This is Dipeptidyl peptidase 4 (DPP4) from Trichophyton tonsurans (Scalp ringworm fungus).